Consider the following 375-residue polypeptide: Succinyl-diaminopimelate desuccinylase (375 aa).

Residue His66 coordinates Zn(2+). Asp68 is an active-site residue. Zn(2+) is bound at residue Asp99. Catalysis depends on Glu133, which acts as the Proton acceptor. 3 residues coordinate Zn(2+): Glu134, Glu162, and His348.

This sequence belongs to the peptidase M20A family. DapE subfamily. As to quaternary structure, homodimer. It depends on Zn(2+) as a cofactor. Co(2+) serves as cofactor.

It catalyses the reaction N-succinyl-(2S,6S)-2,6-diaminopimelate + H2O = (2S,6S)-2,6-diaminopimelate + succinate. Its pathway is amino-acid biosynthesis; L-lysine biosynthesis via DAP pathway; LL-2,6-diaminopimelate from (S)-tetrahydrodipicolinate (succinylase route): step 3/3. Catalyzes the hydrolysis of N-succinyl-L,L-diaminopimelic acid (SDAP), forming succinate and LL-2,6-diaminopimelate (DAP), an intermediate involved in the bacterial biosynthesis of lysine and meso-diaminopimelic acid, an essential component of bacterial cell walls. This chain is Succinyl-diaminopimelate desuccinylase, found in Aeromonas salmonicida (strain A449).